The sequence spans 244 residues: High affinity immunoglobulin epsilon receptor subunit beta (244 aa).

Residues 1-59 (MDTESNRRANLALPQEPSSVPAFEVLEISPQEVSSGRLLKSASSPPLHTWLTVLKKEQE) lie on the Cytoplasmic side of the membrane. A helical transmembrane segment spans residues 60-79 (FLGVTQILTAMICLCFGTVV). The Extracellular portion of the chain corresponds to 80 to 97 (CSVLDISHIEGDIFSSFK). A helical transmembrane segment spans residues 98–117 (AGYPFWGAIFFSISGMLSII). Over 118-130 (SERRNATYLVRGS) the chain is Cytoplasmic. The chain crosses the membrane as a helical span at residues 131–150 (LGANTASSIAGGTGITILII). Over 151–180 (NLKKSLAYIHIHSCQKFFETKCFMASFSTE) the chain is Extracellular. The helical transmembrane segment at 181–200 (IVVMMLFLTILGLGSAVSLT) threads the bilayer. Topologically, residues 201-244 (ICGAGEELKGNKVPEDRVYEELNIYSATYSELEDPGEMSPPIDL) are cytoplasmic. A phosphotyrosine mark is found at tyrosine 219 and tyrosine 225. Serine 226 is subject to Phosphoserine. At tyrosine 229 the chain carries Phosphotyrosine.

It belongs to the MS4A family. In terms of assembly, tetramer of an alpha chain, a beta chain, and two disulfide linked gamma chains. Binds LILRB1. Interacts with FGR, FES/FPS and LYN. Phosphorylated on tyrosine residues by LYN. As to expression, found on the surface of mast cells and basophils.

It localises to the membrane. High affinity receptor that binds to the Fc region of immunoglobulins epsilon. Aggregation of FCER1 by multivalent antigens is required for the full mast cell response, including the release of preformed mediators (such as histamine) by degranulation and de novo production of lipid mediators and cytokines. Also mediates the secretion of important lymphokines. Binding of allergen to receptor-bound IgE leads to cell activation and the release of mediators responsible for the manifestations of allergy. The sequence is that of High affinity immunoglobulin epsilon receptor subunit beta (MS4A2) from Homo sapiens (Human).